Consider the following 557-residue polypeptide: Probable protein kinase UbiB (557 aa).

A Protein kinase domain is found at 121–509; it reads AFDTTPLASA…RKLQTRVVTA (389 aa). Residues 127 to 135 and K154 each bind ATP; that span reads LASASIAQV. The Proton acceptor role is filled by D289. Helical transmembrane passes span 506 to 526 and 535 to 555; these read VVTA…YGLH and VPVW…IAWL.

This sequence belongs to the ABC1 family. UbiB subfamily.

Its subcellular location is the cell inner membrane. It functions in the pathway cofactor biosynthesis; ubiquinone biosynthesis [regulation]. Functionally, is probably a protein kinase regulator of UbiI activity which is involved in aerobic coenzyme Q (ubiquinone) biosynthesis. The chain is Probable protein kinase UbiB from Xanthomonas campestris pv. campestris (strain 8004).